A 235-amino-acid polypeptide reads, in one-letter code: Small ribosomal subunit protein eS4 (235 aa).

Positions 38 to 101 constitute an S4 RNA-binding domain; the sequence is IPLLVLVRDF…EKSYRILFDE (64 aa).

It belongs to the eukaryotic ribosomal protein eS4 family.

The chain is Small ribosomal subunit protein eS4 (rps4e) from Archaeoglobus fulgidus (strain ATCC 49558 / DSM 4304 / JCM 9628 / NBRC 100126 / VC-16).